The following is a 427-amino-acid chain: Adenylosuccinate synthetase (427 aa).

GTP is bound by residues 13 to 19 (GDEGKGK) and 41 to 43 (GHT). Residue Asp14 is the Proton acceptor of the active site. The Mg(2+) site is built by Asp14 and Gly41. IMP is bound by residues 14-17 (DEGK), 39-42 (NAGH), Thr129, Arg143, Gln224, Thr239, and Arg303. Residue His42 is the Proton donor of the active site. Positions 117–137 (QEKQRGEESLGTTKRGIGPAY) are disordered. 299–305 (TTTGRPR) serves as a coordination point for substrate. GTP-binding positions include Arg305, 331–333 (KLD), and 414–416 (GTG).

The protein belongs to the adenylosuccinate synthetase family. As to quaternary structure, homodimer. Mg(2+) is required as a cofactor.

The protein localises to the cytoplasm. It carries out the reaction IMP + L-aspartate + GTP = N(6)-(1,2-dicarboxyethyl)-AMP + GDP + phosphate + 2 H(+). Its pathway is purine metabolism; AMP biosynthesis via de novo pathway; AMP from IMP: step 1/2. In terms of biological role, plays an important role in the de novo pathway of purine nucleotide biosynthesis. Catalyzes the first committed step in the biosynthesis of AMP from IMP. This Caldicellulosiruptor saccharolyticus (strain ATCC 43494 / DSM 8903 / Tp8T 6331) protein is Adenylosuccinate synthetase.